A 943-amino-acid chain; its full sequence is Translation initiation factor IF-2 (943 aa).

The span at 99–113 (VKAAQTQAAPVQPEQ) shows a compositional bias: low complexity. The interval 99 to 354 (VKAAQTQAAP…LEPNQHAFQA (256 aa)) is disordered. A compositionally biased stretch (basic and acidic residues) spans 117–141 (DAVKARAEAAARAEARAKAEAEAAK). Low complexity predominate over residues 145–172 (AKAGNKAKPAAQKPTEAKAETAPVAAET). Residues 173-197 (KPAEPKEKAVKPKHERNGKGKDAKK) show a composition bias toward basic and acidic residues. Low complexity predominate over residues 200–215 (KPAAPAVPQPVVSAEE). Positions 216–250 (QAQRDEEARRAAALRAHQEALLKEKQERQARREAM) are enriched in basic and acidic residues. Residues 251 to 264 (KQQAEQQAKAAQEA) show a composition bias toward low complexity. Basic and acidic residues-rich tracts occupy residues 295–308 (AKKE…DEGQ) and 319–335 (GGRD…ERVR). The tr-type G domain occupies 443–612 (PRPPVVTVMG…LLEAEVLELT (170 aa)). Residues 452–459 (GHVDHGKT) are G1. Position 452–459 (452–459 (GHVDHGKT)) interacts with GTP. The G2 stretch occupies residues 477-481 (GITQH). A G3 region spans residues 498–501 (DTPG). GTP-binding positions include 498–502 (DTPGH) and 552–555 (NKID). The segment at 552–555 (NKID) is G4. The tract at residues 588–590 (SAK) is G5.

The protein belongs to the TRAFAC class translation factor GTPase superfamily. Classic translation factor GTPase family. IF-2 subfamily.

The protein localises to the cytoplasm. In terms of biological role, one of the essential components for the initiation of protein synthesis. Protects formylmethionyl-tRNA from spontaneous hydrolysis and promotes its binding to the 30S ribosomal subunits. Also involved in the hydrolysis of GTP during the formation of the 70S ribosomal complex. The polypeptide is Translation initiation factor IF-2 (Neisseria gonorrhoeae (strain ATCC 700825 / FA 1090)).